The primary structure comprises 547 residues: CTP synthase (547 aa).

The tract at residues 1–266 is amidoligase domain; sequence MTKYIFVTGG…GDYLVERLGL (266 aa). Ser13 is a binding site for CTP. Ser13 serves as a coordination point for UTP. 14–19 lines the ATP pocket; sequence SVGKGI. L-glutamine is bound at residue Tyr54. Asp71 contributes to the ATP binding site. The Mg(2+) site is built by Asp71 and Glu141. CTP contacts are provided by residues 148-150, 187-192, and Lys223; these read DIE and KTKPTQ. UTP is bound by residues 187–192 and Lys223; that span reads KTKPTQ. The Glutamine amidotransferase type-1 domain occupies 291-533; it reads PIALVGKYVE…IAAAAQTLLA (243 aa). An L-glutamine-binding site is contributed by Gly353. Cys380 serves as the catalytic Nucleophile; for glutamine hydrolysis. Residues 381–384, Glu404, and Arg461 each bind L-glutamine; that span reads LGMQ. Active-site residues include His506 and Glu508.

The protein belongs to the CTP synthase family. In terms of assembly, homotetramer.

The enzyme catalyses UTP + L-glutamine + ATP + H2O = CTP + L-glutamate + ADP + phosphate + 2 H(+). It catalyses the reaction L-glutamine + H2O = L-glutamate + NH4(+). It carries out the reaction UTP + NH4(+) + ATP = CTP + ADP + phosphate + 2 H(+). The protein operates within pyrimidine metabolism; CTP biosynthesis via de novo pathway; CTP from UDP: step 2/2. Allosterically activated by GTP, when glutamine is the substrate; GTP has no effect on the reaction when ammonia is the substrate. The allosteric effector GTP functions by stabilizing the protein conformation that binds the tetrahedral intermediate(s) formed during glutamine hydrolysis. Inhibited by the product CTP, via allosteric rather than competitive inhibition. Catalyzes the ATP-dependent amination of UTP to CTP with either L-glutamine or ammonia as the source of nitrogen. Regulates intracellular CTP levels through interactions with the four ribonucleotide triphosphates. The protein is CTP synthase of Chloroflexus aggregans (strain MD-66 / DSM 9485).